A 406-amino-acid chain; its full sequence is MTEHLPMPQFGPLAGVRVVFSGIEIAGPFAGQMFAEWGAEVIWIENVAWADTIRVQPHYPQLSRRNLHALSLNIFKDGGRDAFLKLMETTDIFIEASKGPAFARRGITDEVLWEHNPKLVIAHLSGFGQYGDPQYTNLPAYNTIAQAFSGYLIQNGDKDQPMPAFPYTADYFSGMTATTSALAALYKVQQTGKGESIDIAMYEVMLRMGQYFMMDYFNGGEICPRMTKGKEPYYAGCGLYRCQDGYIVMEVVGITQIEEIFKDIGLAHLLGTPEVPKGTQLIHRINCPHGQLFEDELDEWLANQPITAVLKRLSELNIASAKVLTIPELEGNPQYVARESITQWKTMSGETCKGPNIMPKFKNNPGKIWRGMPAHGMDTNAILKNIGYSDEQIRELVDKGLAKIVE.

Lysine 98 and arginine 105 together coordinate CoA. Aspartate 170 acts as the Nucleophile in catalysis.

It belongs to the CoA-transferase III family. CaiB subfamily. Homodimer.

The protein localises to the cytoplasm. It catalyses the reaction crotonobetainyl-CoA + (R)-carnitine = crotonobetaine + (R)-carnitinyl-CoA. The enzyme catalyses 4-(trimethylamino)butanoyl-CoA + (R)-carnitine = (R)-carnitinyl-CoA + 4-(trimethylamino)butanoate. The protein operates within amine and polyamine metabolism; carnitine metabolism. Functionally, catalyzes the reversible transfer of the CoA moiety from gamma-butyrobetainyl-CoA to L-carnitine to generate L-carnitinyl-CoA and gamma-butyrobetaine. Is also able to catalyze the reversible transfer of the CoA moiety from gamma-butyrobetainyl-CoA or L-carnitinyl-CoA to crotonobetaine to generate crotonobetainyl-CoA. This is L-carnitine CoA-transferase (caiB) from Proteus sp. (strain LE138).